A 430-amino-acid polypeptide reads, in one-letter code: ATP-dependent RNA helicase RhlB (430 aa).

A Q motif motif is present at residues 9–37 (QKFSDFALHPQVIEALESKGFHYCTPIQA). Positions 40 to 219 (LPLTLSGRDV…FEQMNNAEYV (180 aa)) constitute a Helicase ATP-binding domain. Position 53-60 (53-60 (AQTGTGKT)) interacts with ATP. A DEAD box motif is present at residues 165–168 (DEAD). In terms of domain architecture, Helicase C-terminal spans 245–390 (RLLQTLLEEE…LSKYNSDALM (146 aa)). The segment at 392-430 (DLPAPKRLTRPPRSNNGPRRHNSAPRRSGAPRNNRKRAD) is disordered.

This sequence belongs to the DEAD box helicase family. RhlB subfamily. In terms of assembly, component of the RNA degradosome, which is a multiprotein complex involved in RNA processing and mRNA degradation.

The protein resides in the cytoplasm. It catalyses the reaction ATP + H2O = ADP + phosphate + H(+). Its function is as follows. DEAD-box RNA helicase involved in RNA degradation. Has RNA-dependent ATPase activity and unwinds double-stranded RNA. The sequence is that of ATP-dependent RNA helicase RhlB from Pectobacterium atrosepticum (strain SCRI 1043 / ATCC BAA-672) (Erwinia carotovora subsp. atroseptica).